The chain runs to 395 residues: NAD(P)H-quinone oxidoreductase subunit H, chloroplastic (395 aa).

Belongs to the complex I 49 kDa subunit family. As to quaternary structure, NDH is composed of at least 16 different subunits, 5 of which are encoded in the nucleus.

It is found in the plastid. Its subcellular location is the chloroplast thylakoid membrane. The enzyme catalyses a plastoquinone + NADH + (n+1) H(+)(in) = a plastoquinol + NAD(+) + n H(+)(out). It carries out the reaction a plastoquinone + NADPH + (n+1) H(+)(in) = a plastoquinol + NADP(+) + n H(+)(out). NDH shuttles electrons from NAD(P)H:plastoquinone, via FMN and iron-sulfur (Fe-S) centers, to quinones in the photosynthetic chain and possibly in a chloroplast respiratory chain. The immediate electron acceptor for the enzyme in this species is believed to be plastoquinone. Couples the redox reaction to proton translocation, and thus conserves the redox energy in a proton gradient. The sequence is that of NAD(P)H-quinone oxidoreductase subunit H, chloroplastic from Citrus sinensis (Sweet orange).